The following is a 94-amino-acid chain: Aspartyl/glutamyl-tRNA(Asn/Gln) amidotransferase subunit C (94 aa).

Belongs to the GatC family. Heterotrimer of A, B and C subunits.

The enzyme catalyses L-glutamyl-tRNA(Gln) + L-glutamine + ATP + H2O = L-glutaminyl-tRNA(Gln) + L-glutamate + ADP + phosphate + H(+). It carries out the reaction L-aspartyl-tRNA(Asn) + L-glutamine + ATP + H2O = L-asparaginyl-tRNA(Asn) + L-glutamate + ADP + phosphate + 2 H(+). Its function is as follows. Allows the formation of correctly charged Asn-tRNA(Asn) or Gln-tRNA(Gln) through the transamidation of misacylated Asp-tRNA(Asn) or Glu-tRNA(Gln) in organisms which lack either or both of asparaginyl-tRNA or glutaminyl-tRNA synthetases. The reaction takes place in the presence of glutamine and ATP through an activated phospho-Asp-tRNA(Asn) or phospho-Glu-tRNA(Gln). This is Aspartyl/glutamyl-tRNA(Asn/Gln) amidotransferase subunit C from Syntrophomonas wolfei subsp. wolfei (strain DSM 2245B / Goettingen).